Here is a 318-residue protein sequence, read N- to C-terminus: Ferrochelatase (318 aa).

Residues histidine 186 and glutamate 264 each contribute to the Fe cation site.

This sequence belongs to the ferrochelatase family.

The protein resides in the cytoplasm. The catalysed reaction is heme b + 2 H(+) = protoporphyrin IX + Fe(2+). It participates in porphyrin-containing compound metabolism; protoheme biosynthesis; protoheme from protoporphyrin-IX: step 1/1. Functionally, catalyzes the ferrous insertion into protoporphyrin IX. The polypeptide is Ferrochelatase (Chlamydia caviae (strain ATCC VR-813 / DSM 19441 / 03DC25 / GPIC) (Chlamydophila caviae)).